The chain runs to 338 residues: Gibberellin 2-beta-dioxygenase 8 (338 aa).

The 100-residue stretch at 191-290 (NTCYLRMNRY…RFSTAYFMCP (100 aa)) folds into the Fe2OG dioxygenase domain. Residues H215, D217, and H271 each coordinate Fe cation. The active site involves R281. Residue R281 participates in 2-oxoglutarate binding.

It belongs to the iron/ascorbate-dependent oxidoreductase family. GA2OX subfamily. Fe(2+) is required as a cofactor.

The catalysed reaction is gibberellin A1 + 2-oxoglutarate + O2 = gibberellin A8 + succinate + CO2. It functions in the pathway plant hormone biosynthesis; gibberellin biosynthesis. Functionally, catalyzes the 2-beta-hydroxylation of gibberellins (GA) precursors, rendering them unable to be converted to active GAs. Hydroxylates the C20-GA GA12 and GA53, but is not active on C19-GAs, like GA1, GA4, GA9 and GA20. The protein is Gibberellin 2-beta-dioxygenase 8 (GA2OX8) of Arabidopsis thaliana (Mouse-ear cress).